The chain runs to 756 residues: NADP-dependent malic enzyme (756 aa).

The tract at residues 1–428 is malic enzyme; the sequence is MTEQLRQAAL…KLTQFVYKTS (428 aa). The active-site Proton donor is Tyr39. Lys94 functions as the Proton acceptor in the catalytic mechanism. Residues Glu136, Asp137, and Asp162 each contribute to the a divalent metal cation site. NADP(+) contacts are provided by residues 195-198, Asn288, and Asn320; that span reads AGAA. Residues 429–756 form a phosphate acetyltransferase region; the sequence is LFMRPIFSQA…AYAAVKAQQE (328 aa).

The protein in the N-terminal section; belongs to the malic enzymes family. It in the C-terminal section; belongs to the phosphate acetyltransferase and butyryltransferase family. Requires Mg(2+) as cofactor. It depends on Mn(2+) as a cofactor.

The enzyme catalyses (S)-malate + NADP(+) = pyruvate + CO2 + NADPH. It catalyses the reaction oxaloacetate + H(+) = pyruvate + CO2. This Haemophilus influenzae (strain ATCC 51907 / DSM 11121 / KW20 / Rd) protein is NADP-dependent malic enzyme (maeB).